Reading from the N-terminus, the 81-residue chain is Photosystem I iron-sulfur center (81 aa).

2 consecutive 4Fe-4S ferredoxin-type domains span residues 2–31 (AHSV…MIPW) and 39–68 (IASA…VRVY). Residues cysteine 11, cysteine 14, cysteine 17, cysteine 21, cysteine 48, cysteine 51, cysteine 54, and cysteine 58 each contribute to the [4Fe-4S] cluster site.

In terms of assembly, the eukaryotic PSI reaction center is composed of at least 11 subunits. [4Fe-4S] cluster serves as cofactor.

Its subcellular location is the plastid. It localises to the chloroplast thylakoid membrane. The catalysed reaction is reduced [plastocyanin] + hnu + oxidized [2Fe-2S]-[ferredoxin] = oxidized [plastocyanin] + reduced [2Fe-2S]-[ferredoxin]. Its function is as follows. Apoprotein for the two 4Fe-4S centers FA and FB of photosystem I (PSI); essential for photochemical activity. FB is the terminal electron acceptor of PSI, donating electrons to ferredoxin. The C-terminus interacts with PsaA/B/D and helps assemble the protein into the PSI complex. Required for binding of PsaD and PsaE to PSI. PSI is a plastocyanin-ferredoxin oxidoreductase, converting photonic excitation into a charge separation, which transfers an electron from the donor P700 chlorophyll pair to the spectroscopically characterized acceptors A0, A1, FX, FA and FB in turn. The polypeptide is Photosystem I iron-sulfur center (Psilotum nudum (Whisk fern)).